The sequence spans 256 residues: BI1-like protein (256 aa).

7 helical membrane-spanning segments follow: residues 53 to 73 (VYGI…VVVL), 85 to 105 (PGIL…LHIY), 113 to 133 (LILL…SCAM), 138 to 158 (IVLQ…AYTF), 167 to 187 (FSFL…TSFI), 189 to 209 (MFFP…ALVF), and 228 to 248 (EYIL…LTIL).

Belongs to the BI1 family.

Its subcellular location is the membrane. The polypeptide is BI1-like protein (Arabidopsis thaliana (Mouse-ear cress)).